Here is a 199-residue protein sequence, read N- to C-terminus: ATP-dependent Clp protease proteolytic subunit (199 aa).

Catalysis depends on Ser-99, which acts as the Nucleophile. His-124 is an active-site residue.

It belongs to the peptidase S14 family. Fourteen ClpP subunits assemble into 2 heptameric rings which stack back to back to give a disk-like structure with a central cavity, resembling the structure of eukaryotic proteasomes.

The protein localises to the cytoplasm. It carries out the reaction Hydrolysis of proteins to small peptides in the presence of ATP and magnesium. alpha-casein is the usual test substrate. In the absence of ATP, only oligopeptides shorter than five residues are hydrolyzed (such as succinyl-Leu-Tyr-|-NHMec, and Leu-Tyr-Leu-|-Tyr-Trp, in which cleavage of the -Tyr-|-Leu- and -Tyr-|-Trp bonds also occurs).. In terms of biological role, cleaves peptides in various proteins in a process that requires ATP hydrolysis. Has a chymotrypsin-like activity. Plays a major role in the degradation of misfolded proteins. The chain is ATP-dependent Clp protease proteolytic subunit from Lactococcus lactis subsp. lactis (strain IL1403) (Streptococcus lactis).